The sequence spans 542 residues: Putative sodium-dependent excitatory amino acid transporter glt-6 (542 aa).

At 1–15 the chain is on the cytoplasmic side; that stretch reads MKSKRRDDIVQFCRE. 3 helical membrane-spanning segments follow: residues 16 to 36, 55 to 75, and 93 to 113; these read NTLLVMTMFSVFLGVVLGFGL, IFMQVLKMMILPLIFSSLISA, and LYYLSTAVLATILGIFLVTVI. Topologically, residues 114 to 191 are extracellular; it reads HPGDPSIKGT…IVKRSIGMTK (78 aa). Asparagine 175 carries an N-linked (GlcNAc...) asparagine glycan. A run of 5 helical transmembrane segments spans residues 192–212, 234–254, 265–285, 303–323, and 386–406; these read GMNILGIIVFCTGFGIVISQL, VVTLMWFAPLGITCLICGNLL, VLALYVFTVCAGLILHTIITV, GMIQAAVTAFGTASGGATLPM, and TIASIGLGSVPAGLVSILLIL. The segment covering 505–517 has biased composition (low complexity); the sequence is RIGSRIGSRRPSS. Residues 505–542 are disordered; the sequence is RIGSRIGSRRPSSTNLHLSWRNNNIEPPYTPLPNDENV. The span at 518–529 shows a compositional bias: polar residues; sequence TNLHLSWRNNNI.

It belongs to the dicarboxylate/amino acid:cation symporter (DAACS) (TC 2.A.23) family.

The protein localises to the membrane. The chain is Putative sodium-dependent excitatory amino acid transporter glt-6 (glt-6) from Caenorhabditis elegans.